We begin with the raw amino-acid sequence, 431 residues long: MKNYIEIVDVYARQILDSRCNPTVEVEVELEDGTVGVAAVPSGASTGAFEAVELRDGDKSKYLGKGVLKAVDNVNTIIADELVGMNVLDQVAIDKTMIELDGTDNKAKLGANAMLGVSLACAKAAANFLGMSLYQYIGGVNAKVLPVPMMNIINGGKHADNNVDLQEFMIMPAGAPSFSEALRMCSEVYHALKSTLKSQGYDTGVGDEGGFAPNLKSNEEAIIVIIEAIKKAGYTPGKDIFIALDPASSEIFEDGKYNLAGEGRVLTPEEMANYYVELAEKYPIISIEDGMAEEDWDGWKILTEKIGKKVQLVGDDLFVTNTERLAKGIKLGVANSILIKLNQIGTLTETLNAIEMAERAGYTAVVSHRSGETEDTTIADLVVAVNAGQIKTGAPARSERVAKYNQLLRIEEELNDMGEYRGLKAFYNINK.

Residue Gln-166 participates in (2R)-2-phosphoglycerate binding. Glu-208 serves as the catalytic Proton donor. 3 residues coordinate Mg(2+): Asp-245, Glu-288, and Asp-315. The (2R)-2-phosphoglycerate site is built by Lys-340, Arg-369, Ser-370, and Lys-391. Lys-340 acts as the Proton acceptor in catalysis.

This sequence belongs to the enolase family. The cofactor is Mg(2+).

It is found in the cytoplasm. Its subcellular location is the secreted. The protein resides in the cell surface. The catalysed reaction is (2R)-2-phosphoglycerate = phosphoenolpyruvate + H2O. It functions in the pathway carbohydrate degradation; glycolysis; pyruvate from D-glyceraldehyde 3-phosphate: step 4/5. Catalyzes the reversible conversion of 2-phosphoglycerate (2-PG) into phosphoenolpyruvate (PEP). It is essential for the degradation of carbohydrates via glycolysis. This Clostridium botulinum (strain 657 / Type Ba4) protein is Enolase.